The sequence spans 265 residues: MVLYFIGLGLYDERDITVKGLEIAKKCDYVFAEFYTSLMAGTTLGRIQKLIGKEIRVLSREDVELNFENIVLPLAKENDVAFLTPGDPLVATTHAELRIRAKRAGVESYVIHAPSIYSAVGITGLHIYKFGKSATVAYPEGNWFPTSYYDVIKENAERGLHTLLFLDIKAEKRMYMTANEAMELLLKVEDMKKGGVFTDDTLVVVLARAGSLNPTIRAGYVKDLIREDFGDPPHILIVPGKLHIVEAEYLVEIAGAPREILRVNV.

Residues Leu10, Asp87, Val90, 115–116 (SI), Leu166, Ala209, and His234 contribute to the S-adenosyl-L-methionine site.

The protein belongs to the diphthine synthase family. In terms of assembly, homodimer.

The enzyme catalyses 2-[(3S)-amino-3-carboxypropyl]-L-histidyl-[translation elongation factor 2] + 3 S-adenosyl-L-methionine = diphthine-[translation elongation factor 2] + 3 S-adenosyl-L-homocysteine + 3 H(+). It functions in the pathway protein modification; peptidyl-diphthamide biosynthesis. In terms of biological role, S-adenosyl-L-methionine-dependent methyltransferase that catalyzes the trimethylation of the amino group of the modified target histidine residue in translation elongation factor 2 (EF-2), to form an intermediate called diphthine. The three successive methylation reactions represent the second step of diphthamide biosynthesis. This is Diphthine synthase from Pyrococcus horikoshii (strain ATCC 700860 / DSM 12428 / JCM 9974 / NBRC 100139 / OT-3).